The sequence spans 1439 residues: Mediator of RNA polymerase II transcription subunit 23 (1439 aa).

Residues 282 to 318 (SQMLNLQKHQKQRYNALEEQLVNLIVQAMEMTEANDA) are a coiled coil. Residues 358 to 625 (HIVLALHEKL…HHVPTHYRVQ (268 aa)) are interaction with Hsf. 2 disordered regions span residues 1338–1372 (NDNT…QQQQ) and 1401–1439 (SVPL…MRHN). Low complexity-rich tracts occupy residues 1348-1372 (SQTQ…QQQQ) and 1411-1439 (QQQQ…MRHN).

Belongs to the Mediator complex subunit 23 family. As to quaternary structure, component of the Mediator complex. Interacts with Hsf.

The protein resides in the nucleus. Functionally, component of the Mediator complex, a coactivator involved in the regulated transcription of nearly all RNA polymerase II-dependent genes. Mediator functions as a bridge to convey information from gene-specific regulatory proteins to the basal RNA polymerase II transcription machinery. Mediator is recruited to promoters by direct interactions with regulatory proteins and serves as a scaffold for the assembly of a functional preinitiation complex with RNA polymerase II and the general transcription factors. Required for transcriptional activation in response to heat shock. This is Mediator of RNA polymerase II transcription subunit 23 (MED23) from Drosophila melanogaster (Fruit fly).